The following is a 244-amino-acid chain: Uridylate kinase (244 aa).

16 to 19 contributes to the ATP binding site; it reads KLSG. Residue glycine 58 participates in UMP binding. The ATP site is built by glycine 59 and arginine 63. Residues aspartate 78 and 139–146 contribute to the UMP site; that span reads VGAPYFTT. ATP-binding residues include threonine 166, tyrosine 172, and aspartate 175.

It belongs to the UMP kinase family. As to quaternary structure, homohexamer.

The protein localises to the cytoplasm. The enzyme catalyses UMP + ATP = UDP + ADP. It functions in the pathway pyrimidine metabolism; CTP biosynthesis via de novo pathway; UDP from UMP (UMPK route): step 1/1. Inhibited by UTP. Catalyzes the reversible phosphorylation of UMP to UDP. This chain is Uridylate kinase, found in Novosphingobium aromaticivorans (strain ATCC 700278 / DSM 12444 / CCUG 56034 / CIP 105152 / NBRC 16084 / F199).